A 58-amino-acid chain; its full sequence is uncharacterized protein (58 aa).

This is an uncharacterized protein from Dictyostelium discoideum (Social amoeba).